A 274-amino-acid chain; its full sequence is Diaminopimelate epimerase (274 aa).

Substrate contacts are provided by Asn-11, Gln-44, and Asn-64. The Proton donor role is filled by Cys-73. Substrate is bound by residues 74 to 75 (GN), Asn-157, Asn-190, and 208 to 209 (ER). Catalysis depends on Cys-217, which acts as the Proton acceptor. Position 218–219 (218–219 (GS)) interacts with substrate.

The protein belongs to the diaminopimelate epimerase family. In terms of assembly, homodimer.

Its subcellular location is the cytoplasm. It catalyses the reaction (2S,6S)-2,6-diaminopimelate = meso-2,6-diaminopimelate. It participates in amino-acid biosynthesis; L-lysine biosynthesis via DAP pathway; DL-2,6-diaminopimelate from LL-2,6-diaminopimelate: step 1/1. In terms of biological role, catalyzes the stereoinversion of LL-2,6-diaminopimelate (L,L-DAP) to meso-diaminopimelate (meso-DAP), a precursor of L-lysine and an essential component of the bacterial peptidoglycan. The sequence is that of Diaminopimelate epimerase from Actinobacillus succinogenes (strain ATCC 55618 / DSM 22257 / CCUG 43843 / 130Z).